The primary structure comprises 703 residues: Pentatricopeptide repeat-containing protein At1g22830 (703 aa).

PPR repeat units lie at residues 82–116 (VLYS…GLEF), 117–147 (DSVL…SEIL), 148–182 (HPLP…GIRA), 183–217 (DEFT…SHRC), 218–248 (NLYV…MSER), 249–283 (DAVS…GVEA), 284–318 (SIVT…NVRI), 319–353 (GSVA…CSFS), 356–386 (IDNV…VEAN), 387–421 (SLST…GFHP), 422–452 (NHIT…ILRR), 458–488 (CLIL…MRKR), 489–523 (DKVT…GIKP), 524–554 (DHVT…MEHV), and 560–594 (RLEH…PSSA). The segment at 595–671 (MCATLLKACL…AHEFALMETD (77 aa)) is type E motif. A disordered region spans residues 671 to 703 (DSELDGENNKPMNDDSVINQEQSSDEERLVEVG).

The protein belongs to the PPR family. PCMP-E subfamily.

The sequence is that of Pentatricopeptide repeat-containing protein At1g22830 (PCMP-E24) from Arabidopsis thaliana (Mouse-ear cress).